The sequence spans 1010 residues: Protein CROWDED NUCLEI 4 (1010 aa).

Coiled coils occupy residues 82 to 350 (LLLL…LIQN) and 404 to 763 (EKEH…NLER). 2 short sequence motifs (nuclear localization signal) span residues 445-452 (NRKTTMLE) and 679-686 (LKRLDAER). 3 disordered regions span residues 787–813 (GVST…PSSA), 839–937 (HYEE…TQTP), and 966–994 (DCSE…GINA). Basic and acidic residues predominate over residues 849–863 (EKLKLESSRREEKAY). 2 stretches are compositionally biased toward polar residues: residues 883–893 (NTSGDETSEPS) and 912–921 (TQSVISSPQN).

The protein belongs to the CRWN family. Core component of the LINC complex which is composed of inner nuclear membrane SUN domain-containing proteins coupled to outer nuclear membrane WIP proteins, the nucleoskeletal CRWN/LINC proteins, and, possibly, KAKU4. Binds to KAKU4. In terms of tissue distribution, expressed at low levels in roots, leaves, flowers and flower stalks.

Its subcellular location is the nucleus membrane. It localises to the nucleus. The protein localises to the nucleoplasm. The protein resides in the nucleus lamina. It is found in the cytoplasm. Functionally, component of SUN-protein-containing multivariate complexes also called LINC complexes which link the nucleoskeleton and cytoskeleton by providing versatile outer nuclear membrane attachment sites for cytoskeletal filaments. Required for nucleus structure organization (e.g. size and shape). Involved in the maintenance of interphase chromocenter integrity and organization. The sequence is that of Protein CROWDED NUCLEI 4 from Arabidopsis thaliana (Mouse-ear cress).